Consider the following 120-residue polypeptide: Chaperonin GroEL (120 aa).

ATP is bound at residue 23–27; it reads DGTTT.

The protein belongs to the chaperonin (HSP60) family. In terms of assembly, forms a cylinder of 14 subunits composed of two heptameric rings stacked back-to-back. Interacts with the co-chaperonin GroES.

The protein localises to the cytoplasm. The catalysed reaction is ATP + H2O + a folded polypeptide = ADP + phosphate + an unfolded polypeptide.. In terms of biological role, together with its co-chaperonin GroES, plays an essential role in assisting protein folding. The GroEL-GroES system forms a nano-cage that allows encapsulation of the non-native substrate proteins and provides a physical environment optimized to promote and accelerate protein folding. This Mycobacterium kansasii protein is Chaperonin GroEL.